Consider the following 21-residue polypeptide: Ocellatin-3 (21 aa).

An Isoleucine amide modification is found at Ile21.

Expressed by the skin dorsal glands.

Its subcellular location is the secreted. In terms of biological role, has hemolytic activity against human erythrocytes and antibacterial activity against the Gram-negative bacterium E.coli. This chain is Ocellatin-3, found in Leptodactylus ocellatus (Argus frog).